The following is a 351-amino-acid chain: Phosphate acyltransferase (351 aa).

The protein belongs to the PlsX family. As to quaternary structure, homodimer. Probably interacts with PlsY.

Its subcellular location is the cytoplasm. It catalyses the reaction a fatty acyl-[ACP] + phosphate = an acyl phosphate + holo-[ACP]. Its pathway is lipid metabolism; phospholipid metabolism. In terms of biological role, catalyzes the reversible formation of acyl-phosphate (acyl-PO(4)) from acyl-[acyl-carrier-protein] (acyl-ACP). This enzyme utilizes acyl-ACP as fatty acyl donor, but not acyl-CoA. The polypeptide is Phosphate acyltransferase (Paramagnetospirillum magneticum (strain ATCC 700264 / AMB-1) (Magnetospirillum magneticum)).